The sequence spans 247 residues: Oil body-associated protein 2B (247 aa).

The tract at residues 1–28 (MASSDKVPVACPASSGDGKEPMGNPTKT) is disordered.

The protein belongs to the OBAP family.

This chain is Oil body-associated protein 2B, found in Arabidopsis thaliana (Mouse-ear cress).